The sequence spans 620 residues: Probable indole-3-acetic acid-amido synthetase GH3.7 (620 aa).

The protein belongs to the IAA-amido conjugating enzyme family. As to expression, ubiquitous.

Its function is as follows. May catalyze the synthesis of indole-3-acetic acid (IAA)-amino acid conjugates, providing a mechanism for the plant to cope with the presence of excess auxin. In Oryza sativa subsp. japonica (Rice), this protein is Probable indole-3-acetic acid-amido synthetase GH3.7 (GH3.7).